The chain runs to 369 residues: Deacetylase EF_0837 (369 aa).

Zn(2+) contacts are provided by histidine 58, histidine 60, lysine 152, histidine 186, histidine 209, and aspartate 270. Lysine 152 bears the N6-carboxylysine mark.

It belongs to the metallo-dependent hydrolases superfamily. Atu3266/EF_0837 deacetylase family. Zn(2+) serves as cofactor.

Its function is as follows. Esterase that can catalyze the deacetylation of acetyl-(R)-mandelate, but with very low efficiency (in vitro). The sequence is that of Deacetylase EF_0837 from Enterococcus faecalis (strain ATCC 700802 / V583).